The sequence spans 291 residues: MMKREDVLMEALPYIQQFHGKTIVIKLGGHAMVDPEVLENAIKDAVLLHYVGIRVVLVHGGGPEITEKMKALGKESVFVGGLRVTDQETLEIAQMVLVGKINKGIISLIAKCGAKGVGLSGSDGNIILAKKMDLQKVNVQGVEQEVDLGHVGEIEWIDPSLLTTLLDRDYIPVISPIAIDRYGGSLNINADTAAGDIAIALKAYKLINMTDVDGVMDAKRTHVFRKLSITEANALLASGAIGEGMIPKVSSVIKAVENGVKYSHIINGNVEHNLILELFTHEGVGTMISLQ.

Substrate-binding positions include 61 to 62, arginine 83, and asparagine 187; that span reads GG.

The protein belongs to the acetylglutamate kinase family. ArgB subfamily.

The protein resides in the cytoplasm. It catalyses the reaction N-acetyl-L-glutamate + ATP = N-acetyl-L-glutamyl 5-phosphate + ADP. The protein operates within amino-acid biosynthesis; L-arginine biosynthesis; N(2)-acetyl-L-ornithine from L-glutamate: step 2/4. Catalyzes the ATP-dependent phosphorylation of N-acetyl-L-glutamate. This chain is Acetylglutamate kinase, found in Methanoregula boonei (strain DSM 21154 / JCM 14090 / 6A8).